A 176-amino-acid chain; its full sequence is Transcription factor E (176 aa).

The region spanning 5–89 (IDQLMKDMAR…YWKANVDQIN (85 aa)) is the HTH TFE/IIEalpha-type domain.

The protein belongs to the TFE family. In terms of assembly, monomer. Interaction with RNA polymerase subunits RpoF and RpoE is necessary for Tfe stimulatory transcription activity. Able to interact with Tbp and RNA polymerase in the absence of DNA promoter. Interacts both with the preinitiation and elongation complexes.

In terms of biological role, transcription factor that plays a role in the activation of archaeal genes transcribed by RNA polymerase. Facilitates transcription initiation by enhancing TATA-box recognition by TATA-box-binding protein (Tbp), and transcription factor B (Tfb) and RNA polymerase recruitment. Not absolutely required for transcription in vitro, but particularly important in cases where Tbp or Tfb function is not optimal. It dynamically alters the nucleic acid-binding properties of RNA polymerases by stabilizing the initiation complex and destabilizing elongation complexes. Seems to translocate with the RNA polymerase following initiation and acts by binding to the non template strand of the transcription bubble in elongation complexes. This chain is Transcription factor E, found in Metallosphaera sedula (strain ATCC 51363 / DSM 5348 / JCM 9185 / NBRC 15509 / TH2).